A 413-amino-acid chain; its full sequence is Serine hydroxymethyltransferase (413 aa).

(6S)-5,6,7,8-tetrahydrofolate-binding positions include L117 and 121 to 123 (GHL). An N6-(pyridoxal phosphate)lysine modification is found at K226. (6S)-5,6,7,8-tetrahydrofolate-binding positions include E239 and 349 to 351 (SPF).

It belongs to the SHMT family. In terms of assembly, homodimer. It depends on pyridoxal 5'-phosphate as a cofactor.

Its subcellular location is the cytoplasm. It carries out the reaction (6R)-5,10-methylene-5,6,7,8-tetrahydrofolate + glycine + H2O = (6S)-5,6,7,8-tetrahydrofolate + L-serine. Its pathway is one-carbon metabolism; tetrahydrofolate interconversion. It functions in the pathway amino-acid biosynthesis; glycine biosynthesis; glycine from L-serine: step 1/1. In terms of biological role, catalyzes the reversible interconversion of serine and glycine with tetrahydrofolate (THF) serving as the one-carbon carrier. This reaction serves as the major source of one-carbon groups required for the biosynthesis of purines, thymidylate, methionine, and other important biomolecules. Also exhibits THF-independent aldolase activity toward beta-hydroxyamino acids, producing glycine and aldehydes, via a retro-aldol mechanism. The polypeptide is Serine hydroxymethyltransferase (Bacillus cereus (strain AH187)).